The following is a 203-amino-acid chain: Small ribosomal subunit protein uS4 (203 aa).

The region spanning 93-156 (QRLDNVVFRL…MKVPAILEAV (64 aa)) is the S4 RNA-binding domain.

Belongs to the universal ribosomal protein uS4 family. As to quaternary structure, part of the 30S ribosomal subunit. Contacts protein S5. The interaction surface between S4 and S5 is involved in control of translational fidelity.

Its function is as follows. One of the primary rRNA binding proteins, it binds directly to 16S rRNA where it nucleates assembly of the body of the 30S subunit. In terms of biological role, with S5 and S12 plays an important role in translational accuracy. This is Small ribosomal subunit protein uS4 from Lactococcus lactis subsp. lactis (strain IL1403) (Streptococcus lactis).